The following is a 316-amino-acid chain: MSFASETKKELTNLEMKECCEKSELSALLRMNGSLSFSNRRLSIDIQTENAAIARRIYTLLKKGYDVTVELLVRKKMRLKKNNVYIVRLVEKSREILADLHIVRDDFSFIRNISQELIEKKCCKRSYLRGAFLAGGSVNNPETSSYHLEIFSLYKEHNDSICELMNGFDLNSKTLERRKGYITYLKEAEKITEFLNIIGAHNALLRFEDIRIVRDMRNSVNRLVNCETANLNKTIGAALRQIENIRYIDETVGLDILPDKLREIAQLRRDYQDVTLKELGEMVSGGKISKSGINHRLRKIDEIAEKLRAGETVAKK.

Residues 275–309 (TLKELGEMVSGGKISKSGINHRLRKIDEIAEKLRA) constitute a DNA-binding region (H-T-H motif).

This sequence belongs to the WhiA family.

In terms of biological role, involved in cell division and chromosome segregation. The chain is Probable cell division protein WhiA from Bacillus mycoides (strain KBAB4) (Bacillus weihenstephanensis).